The following is a 543-amino-acid chain: Adenosine deaminase 2 (543 aa).

An N-terminal signal peptide occupies residues 1 to 26 (MFLKFKNIFFIVLTLSIVFNGLIVNS). The segment covering 31–54 (INNKNNNNNNNNKDLSSSESGSSS) has biased composition (low complexity). Residues 31–58 (INNKNNNNNNNNKDLSSSESGSSSDINP) form a disordered region. Asn-126 is a glycosylation site (N-linked (GlcNAc...) asparagine). His-144 and His-146 together coordinate Zn(2+). N-linked (GlcNAc...) asparagine glycosylation occurs at Asn-179. Residue 232 to 239 (WRKFDGIF) participates in substrate binding. N-linked (GlcNAc...) asparagine glycans are attached at residues Asn-309 and Asn-326. Residue Gly-355 coordinates substrate. Residue His-389 participates in Zn(2+) binding. Catalysis depends on Glu-392, which acts as the Proton donor. The N-linked (GlcNAc...) asparagine glycan is linked to Asn-397. The active-site Proton acceptor is His-414. Asp-471 contributes to the Zn(2+) binding site. Position 472 (Asp-472) interacts with substrate. Asn-508 and Asn-514 each carry an N-linked (GlcNAc...) asparagine glycan.

This sequence belongs to the metallo-dependent hydrolases superfamily. Adenosine and AMP deaminases family. ADGF subfamily. Requires Zn(2+) as cofactor.

The protein localises to the secreted. It carries out the reaction adenosine + H2O + H(+) = inosine + NH4(+). Adenosine deaminase that may contribute to the degradation of extracellular adenosine, a signaling molecule that controls a variety of cellular responses. May play a role in the regulation of cell proliferation. The polypeptide is Adenosine deaminase 2 (Dictyostelium discoideum (Social amoeba)).